We begin with the raw amino-acid sequence, 505 residues long: AAA-ATPase At5g17760 (505 aa).

Residues 11–27 (TSVFTAYASMAGYMMMI) form a helical membrane-spanning segment. A disordered region spans residues 136–155 (GGGGGVGGRGGGGGRRGGMD). The segment covering 137 to 151 (GGGGVGGRGGGGGRR) has biased composition (gly residues). 260 to 267 (GPPGTGKS) provides a ligand contact to ATP.

It belongs to the AAA ATPase family. BCS1 subfamily. The cofactor is Mg(2+).

Its subcellular location is the membrane. The catalysed reaction is ATP + H2O = ADP + phosphate + H(+). The protein is AAA-ATPase At5g17760 of Arabidopsis thaliana (Mouse-ear cress).